A 144-amino-acid polypeptide reads, in one-letter code: 3-hydroxyacyl-[acyl-carrier-protein] dehydratase FabZ (144 aa).

Residue histidine 48 is part of the active site.

Belongs to the thioester dehydratase family. FabZ subfamily.

The protein resides in the cytoplasm. It carries out the reaction a (3R)-hydroxyacyl-[ACP] = a (2E)-enoyl-[ACP] + H2O. Involved in unsaturated fatty acids biosynthesis. Catalyzes the dehydration of short chain beta-hydroxyacyl-ACPs and long chain saturated and unsaturated beta-hydroxyacyl-ACPs. The sequence is that of 3-hydroxyacyl-[acyl-carrier-protein] dehydratase FabZ from Listeria monocytogenes serotype 4b (strain CLIP80459).